A 287-amino-acid polypeptide reads, in one-letter code: MKRIFLLIATNMAILLVASIVMSILGVNTSTMGGLLVFAAIFGFGGAFISLAISKWMAKKTMGCEVITTPRDNTERWLVETVARQAEQAGIKMPEVAIYQSPELNAFATGPSKNNALVAVSSGLLYGMSQDEIEAVLAHEVSHVANGDMVTLTLIQGVVNTFVIFAARVVAGIINNFVASNDEEGEGLGMFAYMAVVFVLDMLFGILASIIVAYFSRIREYRADEGAARLAGKEKMIAALDRLRQGPETGAMPASMSALGINGKKSMAELLMSHPPLEKRIAALRAS.

2 helical membrane-spanning segments follow: residues I4–I24 and G33–I53. H139 provides a ligand contact to Zn(2+). The active site involves E140. H143 lines the Zn(2+) pocket. A run of 2 helical transmembrane segments spans residues L154 to I174 and A195 to F215. Position 220 (E220) interacts with Zn(2+).

This sequence belongs to the peptidase M48B family. The cofactor is Zn(2+).

The protein resides in the cell inner membrane. In Shewanella halifaxensis (strain HAW-EB4), this protein is Protease HtpX.